Here is a 684-residue protein sequence, read N- to C-terminus: Nuclear transcription factor Y subunit gamma (684 aa).

4 disordered regions span residues 1-74 (MENQ…NIST), 112-238 (MNSP…SSFQ), 414-487 (HSPQ…TQQL), and 511-650 (QQQQ…KNDE). Positions 21–49 (SNSHNNHHNNNNNNNYNNNNNNNINNINN) are enriched in low complexity. Polar residues predominate over residues 58-74 (KSIQQHSPHSSTPNIST). Positions 142–162 (HQHPSSASSSSSSSSSSLSSS) are enriched in low complexity. Residues 163–176 (SHHHHSNHHHHHPN) are compositionally biased toward basic residues. The segment covering 188-203 (PSLNDSSSNGNGTPAL) has biased composition (polar residues). Residues 220-238 (TPTSTPNQRFQSNGSSSFQ) are compositionally biased toward low complexity. The segment covering 414–423 (HSPQLQEQSS) has biased composition (polar residues). The segment covering 424–437 (NNNNNNNNNNNNNN) has biased composition (low complexity). 2 stretches are compositionally biased toward polar residues: residues 438 to 456 (SVSV…SPLS) and 464 to 477 (SQDY…NNHN). 3 stretches are compositionally biased toward low complexity: residues 478 to 487 (QSSLSQTQQL), 511 to 522 (QQQQHSQQISQQ), and 529 to 637 (PSNS…NNNN).

Belongs to the NFYC/HAP5 subunit family. As to quaternary structure, heterotrimeric transcription factor composed of three components, NF-YA, NF-YB and NF-YC. NF-YB and NF-YC must interact and dimerize for NF-YA association and DNA binding.

It localises to the nucleus. Stimulates the transcription of various genes by recognizing and binding to a CCAAT motif in promoters. This chain is Nuclear transcription factor Y subunit gamma (nfyc-1), found in Dictyostelium discoideum (Social amoeba).